A 520-amino-acid polypeptide reads, in one-letter code: Diacylglycerol O-acyltransferase 1 (520 aa).

Disordered regions lie at residues 28 to 57 (RRKS…GAPA) and 72 to 116 (QGTA…AHRR). The span at 34-54 (DSSNGLLLSGSDNNSPSDDVG) shows a compositional bias: low complexity. The span at 81–98 (NNGGGDNNGGGRGGGEGR) shows a compositional bias: gly residues. 7 consecutive transmembrane segments (helical) span residues 126–146 (AIFK…LIAV), 176–196 (WPLF…FTVE), 207–227 (PVVI…PVYV), 233–253 (SAFL…LKLV), 276–296 (VSYY…TLCY), 317–337 (KLVI…NPIV), and 365–385 (VWLC…AELL). The FYXDWWN motif motif lies at 392–398 (FYKDWWN). Helical transmembrane passes span 434 to 454 (LAII…IAVP), 457 to 477 (LFKL…FITN), and 487 to 507 (VGNM…CVLL). The active site involves histidine 447.

Belongs to the membrane-bound acyltransferase family. Sterol o-acyltransferase subfamily. Interacts with LPCAT2 and LPAT2. Ubiquitous. Highest expression in young developing seeds.

The protein resides in the plastid. It localises to the chloroplast membrane. Its subcellular location is the endoplasmic reticulum membrane. The catalysed reaction is an acyl-CoA + a 1,2-diacyl-sn-glycerol = a triacyl-sn-glycerol + CoA. It carries out the reaction 1,2-di-(9Z-octadecenoyl)-sn-glycerol + (9Z)-octadecenoyl-CoA = 1,2,3-tri-(9Z-octadecenoyl)-glycerol + CoA. Its pathway is glycerolipid metabolism; triacylglycerol biosynthesis. Partially inhibited by niacin. In terms of biological role, major contributor to triacylglycerol (TAG) synthesis and oil accumulation in seeds. Catalyzes the acylation of the sn-3 hydroxy group of sn-1,2-diacylglycerol using acyl-CoA. Can use palmitoyl-CoA and oleoyl-CoA as substrates. Can use oleoyl-CoA and linoleoyl-CoA as substrates. Has substrate preference for oleoyl-CoA compared to linoleoyl-CoA. Has complementary functions with PDAT1 that are essential for triacylglycerol synthesis and normal development of both seeds and pollen. In Arabidopsis thaliana (Mouse-ear cress), this protein is Diacylglycerol O-acyltransferase 1.